Here is a 182-residue protein sequence, read N- to C-terminus: MAAEEKDPLSYFAAYGSSSSGSSDEEDNIEPEETSRRTPDPAKSAGGCRNKAEKRLPGPDELFRSVTRPAFLYNPLNKQIDWERHVVKAPEEPPKEFKIWKSNYVPPPETYTTEKKPPPPELDMAIKWSNIYEDNGDDAPQNAKKARLLPEGEETLESDDEKDEHTSKKRKVEPGEPAKKKK.

Disordered regions lie at residues 1–67 and 100–182; these read MAAE…RSVT and WKSN…KKKK. Positions 23–32 are enriched in acidic residues; the sequence is SDEEDNIEPE. The segment covering 50-63 has biased composition (basic and acidic residues); that stretch reads NKAEKRLPGPDELF. The residue at position 67 (Thr67) is a Phosphothreonine. Residue Tyr132 is modified to Phosphotyrosine. Positions 151-162 are enriched in acidic residues; it reads EGEETLESDDEK. Phosphoserine is present on Ser158. Residues 172–182 are compositionally biased toward basic and acidic residues; the sequence is VEPGEPAKKKK.

Belongs to the UPF0690 family. In terms of tissue distribution, expressed in all tissues tested including heart, placenta, liver, skeletal muscle, kidney and pancreas. Weak expression in brain and lung.

The protein is UPF0690 protein C1orf52 (C1orf52) of Homo sapiens (Human).